A 98-amino-acid polypeptide reads, in one-letter code: DNA-binding protein Fis (98 aa).

A DNA-binding region (H-T-H motif) is located at residues 74–93 (QTRAAQMMGINRGTLRKKLK).

This sequence belongs to the transcriptional regulatory Fis family. As to quaternary structure, homodimer.

In terms of biological role, activates ribosomal RNA transcription. Plays a direct role in upstream activation of rRNA promoters. In Proteus hauseri, this protein is DNA-binding protein Fis.